Consider the following 506-residue polypeptide: DEAD-box ATP-dependent RNA helicase CshA (506 aa).

The Q motif signature appears at 2–30; the sequence is QNFKELGISDNTVQSLESMGFKEPTPIQK. Residues 33 to 203 form the Helicase ATP-binding domain; it reads IPYALQGIDI…QQFMKSPKII (171 aa). 46–53 lines the ATP pocket; sequence AQTGTGKT. Residues 150 to 153 carry the DEAD box motif; sequence DEAD. In terms of domain architecture, Helicase C-terminal spans 214 to 375; sequence QIEEFYTIVK…LRPPHRKEVL (162 aa). The tract at residues 436 to 506 is disordered; it reads EKPLSRKGRN…KGRTFADHQK (71 aa). The segment covering 468-480 has biased composition (basic residues); that stretch reads KRSKGYSSKKKST.

Belongs to the DEAD box helicase family. CshA subfamily. As to quaternary structure, oligomerizes, may be a member of the RNA degradosome.

The protein resides in the cytoplasm. It carries out the reaction ATP + H2O = ADP + phosphate + H(+). Its function is as follows. DEAD-box RNA helicase possibly involved in RNA degradation. Unwinds dsRNA in both 5'- and 3'-directions, has RNA-dependent ATPase activity. This is DEAD-box ATP-dependent RNA helicase CshA from Staphylococcus aureus (strain MW2).